We begin with the raw amino-acid sequence, 351 residues long: UDP-3-O-acylglucosamine N-acyltransferase (351 aa).

His240 acts as the Proton acceptor in catalysis.

This sequence belongs to the transferase hexapeptide repeat family. LpxD subfamily. As to quaternary structure, homotrimer.

It catalyses the reaction a UDP-3-O-[(3R)-3-hydroxyacyl]-alpha-D-glucosamine + a (3R)-hydroxyacyl-[ACP] = a UDP-2-N,3-O-bis[(3R)-3-hydroxyacyl]-alpha-D-glucosamine + holo-[ACP] + H(+). It participates in bacterial outer membrane biogenesis; LPS lipid A biosynthesis. Catalyzes the N-acylation of UDP-3-O-acylglucosamine using 3-hydroxyacyl-ACP as the acyl donor. Is involved in the biosynthesis of lipid A, a phosphorylated glycolipid that anchors the lipopolysaccharide to the outer membrane of the cell. This is UDP-3-O-acylglucosamine N-acyltransferase from Pseudomonas putida (strain ATCC 700007 / DSM 6899 / JCM 31910 / BCRC 17059 / LMG 24140 / F1).